Reading from the N-terminus, the 169-residue chain is uncharacterized protein (169 aa).

The Nudix hydrolase domain occupies 28–157; the sequence is ELHLVIHVCI…EFIPYFFLNQ (130 aa). The short motif at 65–87 is the Nudix box element; that stretch reads AGSALKGETSQQAAEREVQEELG. The Mg(2+) site is built by Glu81 and Glu85.

This sequence belongs to the Nudix hydrolase family. Mg(2+) is required as a cofactor.

This is an uncharacterized protein from Listeria monocytogenes serovar 1/2a (strain ATCC BAA-679 / EGD-e).